A 296-amino-acid polypeptide reads, in one-letter code: tRNA dimethylallyltransferase (296 aa).

Residue 2-9 (GPTASGKT) coordinates ATP. 4-9 (TASGKT) lines the substrate pocket. 3 interaction with substrate tRNA regions span residues 27–30 (DSAL), 151–155 (QRLSR), and 232–237 (RCVGYR).

It belongs to the IPP transferase family. As to quaternary structure, monomer. Mg(2+) is required as a cofactor.

The enzyme catalyses adenosine(37) in tRNA + dimethylallyl diphosphate = N(6)-dimethylallyladenosine(37) in tRNA + diphosphate. Catalyzes the transfer of a dimethylallyl group onto the adenine at position 37 in tRNAs that read codons beginning with uridine, leading to the formation of N6-(dimethylallyl)adenosine (i(6)A). The protein is tRNA dimethylallyltransferase of Shewanella baltica (strain OS155 / ATCC BAA-1091).